The primary structure comprises 342 residues: Cyclin-dependent kinase-like 4 (342 aa).

Positions 4-286 (YEKLAKIGEG…CAQLLDSAYF (283 aa)) constitute a Protein kinase domain. ATP contacts are provided by residues 10-18 (IGEGSYGVV) and K33. Residues 45 to 51 (RKIALRE) carry the [NKR]KIAxRE motif. D126 acts as the Proton acceptor in catalysis. Residues 295 to 328 (KRKARSEGRSRRRQQNQLLPLIPGSHISPTPDGR) are disordered.

The protein belongs to the protein kinase superfamily. CMGC Ser/Thr protein kinase family. CDC2/CDKX subfamily.

The protein localises to the cytoplasm. The enzyme catalyses L-seryl-[protein] + ATP = O-phospho-L-seryl-[protein] + ADP + H(+). It catalyses the reaction L-threonyl-[protein] + ATP = O-phospho-L-threonyl-[protein] + ADP + H(+). This chain is Cyclin-dependent kinase-like 4 (Cdkl4), found in Mus musculus (Mouse).